Consider the following 289-residue polypeptide: MDIGLREWLIVIGLIVIAGILFDGWRRMRGGKGKLKFKLDRSFANLPDDDGDSAELLGPARVVEHREPSFDEQDLPSVSAREAKERKGGKRQEEPRQGDLDLDEGLALEADPSDAAETVEPRKGKSKGRKEKEREKAPAVAAEPAPVDEVLIINVIARDESGFKGPALLQNILESGLRFGDMDIFHRHESMAGNGEILFSMANAVKPGTFDLDDIDNFSTRAVSFFLGLPGPRHPKQAFDVMVAAARKLAHELNGELKDEQRSVLTAQTIEHYRQRIIDHERRSLMQKR.

Position 1 (methionine 1) is a topological domain, periplasmic. The helical transmembrane segment at 2–22 threads the bilayer; sequence DIGLREWLIVIGLIVIAGILF. The Cytoplasmic segment spans residues 23–289; the sequence is DGWRRMRGGK…HERRSLMQKR (267 aa). Positions 66–141 are disordered; the sequence is REPSFDEQDL…KEREKAPAVA (76 aa). Positions 81–99 are enriched in basic and acidic residues; that stretch reads REAKERKGGKRQEEPRQGD. A compositionally biased stretch (acidic residues) spans 100–114; that stretch reads LDLDEGLALEADPSD.

It belongs to the ZipA family. Interacts with FtsZ via their C-terminal domains.

Its subcellular location is the cell inner membrane. Essential cell division protein that stabilizes the FtsZ protofilaments by cross-linking them and that serves as a cytoplasmic membrane anchor for the Z ring. Also required for the recruitment to the septal ring of downstream cell division proteins. This chain is Cell division protein ZipA, found in Pseudomonas aeruginosa (strain LESB58).